Here is a 523-residue protein sequence, read N- to C-terminus: GMP synthase [glutamine-hydrolyzing] (523 aa).

One can recognise a Glutamine amidotransferase type-1 domain in the interval 8–205 (KILILDFGSQ…VVNICGCETK (198 aa)). The active-site Nucleophile is the Cys85. Active-site residues include His179 and Glu181. In terms of domain architecture, GMPS ATP-PPase spans 206–398 (WTAENIIEDA…LGLPAEMINR (193 aa)). Position 233–239 (233–239 (SGGVDSS)) interacts with ATP.

Homodimer.

The catalysed reaction is XMP + L-glutamine + ATP + H2O = GMP + L-glutamate + AMP + diphosphate + 2 H(+). Its pathway is purine metabolism; GMP biosynthesis; GMP from XMP (L-Gln route): step 1/1. Its function is as follows. Catalyzes the synthesis of GMP from XMP. The protein is GMP synthase [glutamine-hydrolyzing] of Haemophilus influenzae (strain 86-028NP).